Here is a 689-residue protein sequence, read N- to C-terminus: DNA ligase (689 aa).

Residues 40 to 44 (DAEYD), 89 to 90 (SL), and E121 each bind NAD(+). K123 acts as the N6-AMP-lysine intermediate in catalysis. NAD(+)-binding residues include R144, E179, K295, and K319. 4 residues coordinate Zn(2+): C413, C416, C431, and C437. A BRCT domain is found at 610–689 (KEHSSLTGKI…EEWLTIVNNV (80 aa)).

The protein belongs to the NAD-dependent DNA ligase family. LigA subfamily. It depends on Mg(2+) as a cofactor. Mn(2+) serves as cofactor.

It catalyses the reaction NAD(+) + (deoxyribonucleotide)n-3'-hydroxyl + 5'-phospho-(deoxyribonucleotide)m = (deoxyribonucleotide)n+m + AMP + beta-nicotinamide D-nucleotide.. Functionally, DNA ligase that catalyzes the formation of phosphodiester linkages between 5'-phosphoryl and 3'-hydroxyl groups in double-stranded DNA using NAD as a coenzyme and as the energy source for the reaction. It is essential for DNA replication and repair of damaged DNA. The sequence is that of DNA ligase from Rickettsia canadensis (strain McKiel).